We begin with the raw amino-acid sequence, 331 residues long: Protein RecA (331 aa).

ATP is bound at residue 67-74 (GPESSGKT).

It belongs to the RecA family.

Its subcellular location is the cytoplasm. Can catalyze the hydrolysis of ATP in the presence of single-stranded DNA, the ATP-dependent uptake of single-stranded DNA by duplex DNA, and the ATP-dependent hybridization of homologous single-stranded DNAs. It interacts with LexA causing its activation and leading to its autocatalytic cleavage. This is Protein RecA from Wigglesworthia glossinidia brevipalpis.